A 453-amino-acid polypeptide reads, in one-letter code: Serine/threonine-protein phosphatase 2A regulatory subunit B'' subunit gamma (453 aa).

2 EF-hand domains span residues 273–308 (PSAL…TMTN) and 341–376 (KEPA…IQEL). Ca(2+) is bound by residues D286, D288, N290, M292, and E297.

In terms of assembly, interacts with MCM3AP/GANP, PPP5C, and the phosphatase 2A core enzyme composed of the PPP2CA catalytic subunit and the constant regulatory subunit PPP2R1A. Finds in a complex with ABCB1, TFPI2 and PPP2R3C; leading to the dephosphorylation of ABCB1. As to expression, expressed in all tissues tested including heart, brain, spleen, thymus, lung, liver, kidney and testis.

It is found in the nucleus. It localises to the cytoplasm. Functionally, may regulate MCM3AP phosphorylation through phosphatase recruitment. May act as a negative regulator of ABCB1 expression and function through the dephosphorylation of ABCB1 by TFPI2/PPP2R3C complex. May play a role in the activation-induced cell death of B-cells. The sequence is that of Serine/threonine-protein phosphatase 2A regulatory subunit B'' subunit gamma (Ppp2r3c) from Mus musculus (Mouse).